We begin with the raw amino-acid sequence, 623 residues long: Glutathione import ATP-binding protein GsiA (623 aa).

2 consecutive ABC transporter domains span residues 15 to 269 (VENL…RALL) and 314 to 564 (LRVR…RKLL). Residues 49-56 (GESGSGKS) and 357-364 (GESGSGKS) each bind ATP.

It belongs to the ABC transporter superfamily. Glutathione importer (TC 3.A.1.5.11) family. As to quaternary structure, the complex is composed of two ATP-binding proteins (GsiA), two transmembrane proteins (GsiC and GsiD) and a solute-binding protein (GsiB).

It is found in the cell inner membrane. The enzyme catalyses glutathione(out) + ATP + H2O = glutathione(in) + ADP + phosphate + H(+). In terms of biological role, part of the ABC transporter complex GsiABCD involved in glutathione import. Responsible for energy coupling to the transport system. The protein is Glutathione import ATP-binding protein GsiA of Shigella boydii serotype 4 (strain Sb227).